Consider the following 456-residue polypeptide: Tyrosinase-like protein (456 aa).

An N-terminal signal peptide occupies residues M1–C22. Cu cation contacts are provided by H145, H154, H163, H295, H299, and H322.

Belongs to the tyrosinase family. The cofactor is Cu(2+). In terms of tissue distribution, prismatic layer of shell (at protein level).

The protein resides in the secreted. In Pinctada maxima (Silver-lipped pearl oyster), this protein is Tyrosinase-like protein.